The chain runs to 306 residues: Mitochondrial basic amino acids transporter (306 aa).

6 helical membrane passes run 2–22 (ALDF…GHPF), 61–81 (GLGS…GVQG), 96–116 (FLAG…MELA), 153–172 (GMVS…FLTY), 187–207 (LLVP…WLST), and 255–275 (LLRA…VLTY). 3 Solcar repeats span residues 2-86 (ALDF…TLRA), 90-178 (DSPL…LTRA), and 190-275 (PKLL…VLTY). The tract at residues 283-306 (VDSEAAPGASTTPAGPALAQPSSL) is disordered. Low complexity predominate over residues 287–306 (AAPGASTTPAGPALAQPSSL).

The protein belongs to the mitochondrial carrier (TC 2.A.29) family.

The protein resides in the mitochondrion inner membrane. It carries out the reaction L-lysine(out) + L-arginine(in) = L-lysine(in) + L-arginine(out). The enzyme catalyses L-histidine(out) + L-arginine(in) = L-histidine(in) + L-arginine(out). The catalysed reaction is L-ornithine(in) + L-arginine(out) = L-ornithine(out) + L-arginine(in). It catalyses the reaction L-homoarginine(in) + L-arginine(out) = L-homoarginine(out) + L-arginine(in). It carries out the reaction N(omega)-methyl-L-arginine(in) + L-arginine(out) = N(omega)-methyl-L-arginine(out) + L-arginine(in). The enzyme catalyses L-arginine(in) = L-arginine(out). The catalysed reaction is L-lysine(in) = L-lysine(out). It catalyses the reaction L-ornithine(in) = L-ornithine(out). It carries out the reaction L-histidine(out) = L-histidine(in). Mitochondrial transporter of arginine, lysine, homoarginine, methylarginine and, to a much lesser extent, ornithine and histidine. Does not transport carnitine nor acylcarnitines. Functions by both counter-exchange and uniport mechanisms. Plays a physiological role in the import of basic amino acids into mitochondria for mitochondrial protein synthesis and amino acid degradation. The chain is Mitochondrial basic amino acids transporter (Slc25a29) from Rattus norvegicus (Rat).